The following is a 357-amino-acid chain: Dual-specificity RNA methyltransferase RlmN (357 aa).

E89 functions as the Proton acceptor in the catalytic mechanism. The 232-residue stretch at 109 to 340 (EREKYTVCVS…CTIRESKALD (232 aa)) folds into the Radical SAM core domain. An intrachain disulfide couples C116 to C345. C123, C127, and C130 together coordinate [4Fe-4S] cluster. Residues 173 to 174 (GE), S203, 226 to 228 (SLH), and N302 each bind S-adenosyl-L-methionine. C345 serves as the catalytic S-methylcysteine intermediate.

It belongs to the radical SAM superfamily. RlmN family. Requires [4Fe-4S] cluster as cofactor.

Its subcellular location is the cytoplasm. It catalyses the reaction adenosine(2503) in 23S rRNA + 2 reduced [2Fe-2S]-[ferredoxin] + 2 S-adenosyl-L-methionine = 2-methyladenosine(2503) in 23S rRNA + 5'-deoxyadenosine + L-methionine + 2 oxidized [2Fe-2S]-[ferredoxin] + S-adenosyl-L-homocysteine. It carries out the reaction adenosine(37) in tRNA + 2 reduced [2Fe-2S]-[ferredoxin] + 2 S-adenosyl-L-methionine = 2-methyladenosine(37) in tRNA + 5'-deoxyadenosine + L-methionine + 2 oxidized [2Fe-2S]-[ferredoxin] + S-adenosyl-L-homocysteine. Functionally, specifically methylates position 2 of adenine 2503 in 23S rRNA and position 2 of adenine 37 in tRNAs. m2A2503 modification seems to play a crucial role in the proofreading step occurring at the peptidyl transferase center and thus would serve to optimize ribosomal fidelity. The chain is Dual-specificity RNA methyltransferase RlmN from Helicobacter pylori (strain ATCC 700392 / 26695) (Campylobacter pylori).